We begin with the raw amino-acid sequence, 659 residues long: Crossover junction endonuclease MUS81 (659 aa).

A Helix-hairpin-helix motif 1 motif is present at residues 59 to 78 (KDLSQIKGFGKWMVKLMKGY). The ERCC4 domain maps to 404-503 (ILILDDREKF…KKLIYILEGD (100 aa)). The short motif at 585–622 (TISDVFAIQLMQVPQVTEEIAIAVLDMYPTLLSLASAY) is the Helix-hairpin-helix motif 2 element.

The protein belongs to the XPF family. Forms a heterodimer with EME1A or EME1B. The cofactor is Mg(2+). Requires Ca(2+) as cofactor. In terms of tissue distribution, ubiquitous but preferentially expressed in young flowers buds, notably in anthers.

The protein resides in the nucleus. It is found in the nucleolus. Its function is as follows. Interacts with EME1 to form a DNA structure-specific endonuclease with substrate preference for branched DNA structures with a 5'-end at the branch nick. Typical substrates include 3'-flap structures, D-loops, replication forks, nicked Holliday junctions and also intact Holliday junctions with a reduced efficiency. May be required in mitosis for the processing of stalled or collapsed replication fork intermediates. Plays a role in DNA repair and in genotoxic stress-induced homologous recombination (HR) in somatic cells. Mediates a subset of meiotic recombination events that are insensitive to crossover interference. Together with SEND1, essential for the resolution of toxic replication structures to ensure genome stability, and to maintain telomere integrity and replication. The polypeptide is Crossover junction endonuclease MUS81 (Arabidopsis thaliana (Mouse-ear cress)).